The sequence spans 74 residues: Conotoxin Vc6.11 (74 aa).

The signal sequence occupies residues 1 to 19; sequence MEKLTILLLVAAVLMSTQA. The propeptide occupies 20–41; it reads LIQEQRQKAKINLFSKRKPSAE. 2 disulfide bridges follow: Cys-55/Cys-66 and Cys-61/Cys-71.

This sequence belongs to the conotoxin O2 superfamily. In terms of tissue distribution, expressed by the venom duct.

Its subcellular location is the secreted. Functionally, inhibits voltage-gated ion channels. The sequence is that of Conotoxin Vc6.11 from Conus victoriae (Queen Victoria cone).